A 513-amino-acid chain; its full sequence is Serine/threonine-protein kinase pakH (513 aa).

The region spanning 42–294 (FEIQEKLGEG…PSQLLDHPFI (253 aa)) is the Protein kinase domain. Residues 48–56 (LGEGSFGSV) and Lys71 contribute to the ATP site. Asp163 functions as the Proton acceptor in the catalytic mechanism. The disordered stretch occupies residues 313–358 (KSKKRKSIGPSVSPKQQPNDNNNNNNNNKPQFLSKLLNNNSNSSND). Low complexity predominate over residues 331-357 (NDNNNNNNNNKPQFLSKLLNNNSNSSN). The helical transmembrane segment at 493–512 (IVLYSTLGLILVLSVFFKFF) threads the bilayer.

This sequence belongs to the protein kinase superfamily. STE Ser/Thr protein kinase family. STE20 subfamily. Mg(2+) is required as a cofactor.

The protein resides in the membrane. The enzyme catalyses L-seryl-[protein] + ATP = O-phospho-L-seryl-[protein] + ADP + H(+). The catalysed reaction is L-threonyl-[protein] + ATP = O-phospho-L-threonyl-[protein] + ADP + H(+). This is Serine/threonine-protein kinase pakH (pakH-1) from Dictyostelium discoideum (Social amoeba).